Reading from the N-terminus, the 1396-residue chain is MYNPYQQQQQGMGYNPQQQTGYGYNNYQMPQQPQFNQQPMYPQATGFVPQQPNLYGSNFQTSGGSGMAPQQTGFSQQQTMQPQQTGYIQTQPTGFGGTAPIVTENSELKIPSIRLSFISAEDQKKFEHLFRTAVPKGEQSISGDSASGILLRSGLSAVTLAEIWNLSDIDKTGSLLFPEFALSLHLCSMAKRGEPLPGILPEKWLNEVRSFVDQINFTVPDDPSKILANTPFANFAPKKESDWLAPQSTGYLQNQSAPPMTSFQPQVTGFGGQGLVSQATGGVPMPSTTFGNAAGLTAQRTGGGTLIPLQPQQTAGLIPAQKTGPLNPQTTGFNQQSLQQQRTGGLPQQLTGYQGPPQGQGQQLQQQRTGGFPQVQSQPTGGFVPQTSFQQPQLVSQRTGPMQAQPTGSLQAQPTGRPGEWGFVSMPTGGIPGLNAMQQHFLPNNQLPTSNLHSAMDNKLKENVTWAITKQEKQIYDGLFQAWDNQKKGYVDSNVALNVFTKSGLSRSDLESIWTLVDTDDTGKLNKNQFAVAMHLIYRRLNGYDIPLRLPPELIPPADRTLKDTMDSLKNSLKGGVNNKPTKPPKPQSKPDGTRFKNDDNNFGYVSNVRHRRKSTSDESHKSSVKSSSDYDLSIEDMKKLIHEKRILLDALDTEDQANNYSRSSSSMHEKQIIENLKKEIMAVQTKLDERGNDGPSSDERNKLLATLDHLTRDVVPRLISDIHKVNQEISRKKAEVFKLELLKKNPSWNPEDDESQIQGTGPNGEVTDYDRIKYQSRQKLKQRMAALTGKSTGGNSDLDLELKQATEKAQDEASRQSEMIQDIAAGIKTMEDECAAKLSSSVTEDVGHEKWEQGKGISSEVAKFVKELEAFSKEQRRNIAKSQKQEQTREPLAKQQTNASLVSDSGAAKSAYATPEERAAYIKQQAEKRMNERLAKLGITRKSKSTEQKPPVESKSVSNHSPVPDSEVKSVTRNANEVEVQKPKPDSQPVSKNREPAEQPNSKADTNSVGSQNVVSNTNDDTSGDDDDEEYKAILKQKQEMEARERERKLRKQKAKEERLAKIKKEMEEMKKREMEESQDEEEEEAKQVTSVHVSRAQSSNANSNVIPQQETATENVNTVSQPTSTDTAKQSYHPHESNPFSKMNNNTSQNSTVTNTGTNPFFKSTSQETKIDPHKAEAQRASQRGVASSGGWSDSEEEESEEESPNRAGAAKLASLLFGGMPQPPTTSSSSLNNDAEKVSEQEHENAKQVASTPLSNDDNGKTDSGPSGFAGENESSFSQAPPIPVDAPPAPNSIPPPPPPPPQFSNEAPPVPDSIPPPPPPPSVPSTVPALPDSMPPPPPPPPPPAAPNNTSSSQQASGAPNIGALLGQITGGASLRKVETKVSSGATVGRVL.

Residues 1–20 are disordered; sequence MYNPYQQQQQGMGYNPQQQT. The 90-residue stretch at 122-211 folds into the EH 1 domain; it reads DQKKFEHLFR…EKWLNEVRSF (90 aa). The region spanning 155–190 is the EF-hand 1 domain; that stretch reads LSAVTLAEIWNLSDIDKTGSLLFPEFALSLHLCSMA. 2 stretches are compositionally biased toward polar residues: residues 249-267 and 324-342; these read TGYL…QPQV and GPLN…QQQR. Disordered stretches follow at residues 249–269 and 318–383; these read TGYL…QVTG and IPAQ…TGGF. Residues 343 to 371 are compositionally biased toward low complexity; that stretch reads TGGLPQQLTGYQGPPQGQGQQLQQQRTGG. Residues 374–383 are compositionally biased toward polar residues; it reads QVQSQPTGGF. One can recognise an EH 2 domain in the interval 472–561; sequence EKQIYDGLFQ…PELIPPADRT (90 aa). Positions 505–540 constitute an EF-hand 2 domain; the sequence is LSRSDLESIWTLVDTDDTGKLNKNQFAVAMHLIYRR. Disordered stretches follow at residues 569–630, 746–771, 877–916, 933–1369, and 1377–1396; these read LKNS…SSSD, NPSW…TDYD, RRNI…YATP, ERLA…IGAL, and ASLR…GRVL. The segment covering 877 to 893 has biased composition (basic and acidic residues); that stretch reads RRNIAKSQKQEQTREPL. Composition is skewed to polar residues over residues 895–904 and 1000–1016; these read KQQTNASLVS and QPNS…QNVV. Basic and acidic residues-rich tracts occupy residues 1032-1049 and 1056-1077; these read YKAI…ERER and AKEE…REME. Positions 1037 to 1093 form a coiled coil; the sequence is KQKQEMEARERERKLRKQKAKEERLAKIKKEMEEMKKREMEESQDEEEEEAKQVTSV. The span at 1089–1132 shows a compositional bias: polar residues; the sequence is QVTSVHVSRAQSSNANSNVIPQQETATENVNTVSQPTSTDTAKQ. Positions 1146–1161 are enriched in low complexity; it reads NNNTSQNSTVTNTGTN. Residues 1171–1180 show a composition bias toward basic and acidic residues; the sequence is TKIDPHKAEA. Positions 1196 to 1205 are enriched in acidic residues; the sequence is DSEEEESEEE. The span at 1237–1249 shows a compositional bias: basic and acidic residues; it reads DAEKVSEQEHENA. The span at 1251–1268 shows a compositional bias: polar residues; sequence QVASTPLSNDDNGKTDSG. Composition is skewed to pro residues over residues 1284-1327 and 1337-1350; these read PPIP…PPSV and SMPP…PPAA. Residues 1352–1362 show a composition bias toward polar residues; that stretch reads NNTSSSQQASG. One can recognise a WH2 domain in the interval 1365-1382; that stretch reads NIGALLGQITGGASLRKV.

It belongs to the PAN1 family. In terms of assembly, component of the PAN1 actin cytoskeleton-regulatory complex.

The protein localises to the cell membrane. The protein resides in the endosome membrane. It is found in the cytoplasm. It localises to the cytoskeleton. Its subcellular location is the actin patch. Functionally, component of the PAN1 actin cytoskeleton-regulatory complex required for the internalization of endosomes during actin-coupled endocytosis. The complex links the site of endocytosis to the cell membrane-associated actin cytoskeleton. Mediates uptake of external molecules and vacuolar degradation of plasma membrane proteins. Plays a role in the proper organization of the cell membrane-associated actin cytoskeleton and promotes its destabilization. The polypeptide is Actin cytoskeleton-regulatory complex protein PAN1 (PAN1) (Candida albicans (strain SC5314 / ATCC MYA-2876) (Yeast)).